Here is a 167-residue protein sequence, read N- to C-terminus: CDP-archaeol synthase (167 aa).

The next 5 helical transmembrane spans lie at 4-24 (ILEAFWYILPAYFANSSPVIL), 51-71 (GFLGGLTVGTLIGVIQQIIYP), 80-100 (FKVSFLLALGALVGDLIGSFI), 104-124 (LNLPPGYPAVGLDQWGFLISA), and 139-158 (VLLLLVVTPLIHWGTNVLAY).

The protein belongs to the CDP-archaeol synthase family. The cofactor is Mg(2+).

The protein resides in the cell membrane. The catalysed reaction is 2,3-bis-O-(geranylgeranyl)-sn-glycerol 1-phosphate + CTP + H(+) = CDP-2,3-bis-O-(geranylgeranyl)-sn-glycerol + diphosphate. It participates in membrane lipid metabolism; glycerophospholipid metabolism. Catalyzes the formation of CDP-2,3-bis-(O-geranylgeranyl)-sn-glycerol (CDP-archaeol) from 2,3-bis-(O-geranylgeranyl)-sn-glycerol 1-phosphate (DGGGP) and CTP. This reaction is the third ether-bond-formation step in the biosynthesis of archaeal membrane lipids. In Pyrococcus furiosus (strain ATCC 43587 / DSM 3638 / JCM 8422 / Vc1), this protein is CDP-archaeol synthase.